We begin with the raw amino-acid sequence, 156 residues long: Protein OXIDATIVE STRESS 3 LIKE 3 (156 aa).

The interval 1–67 (MHYQEQMESL…GLSKHYKGKS (67 aa)) is disordered. Basic and acidic residues predominate over residues 13–26 (GEERRRGNYTRDVD).

It localises to the nucleus. In terms of biological role, promotes slightly the tolerance to oxidizing chemicals (e.g. diamide). This Arabidopsis thaliana (Mouse-ear cress) protein is Protein OXIDATIVE STRESS 3 LIKE 3.